We begin with the raw amino-acid sequence, 219 residues long: Lipid transferase CIDEB (219 aa).

A CIDE-N domain is found at 34–110 (PQRPFRVCDH…VLQSGQSWSP (77 aa)).

The protein belongs to the CIDE family. In terms of assembly, interacts with DFFA. Interacts with DFFB; inhibited by DFFB. Interacts with APOB. Interacts with PREB/SEC12; facilitating loading of SCAP-SREBP into COPII vesicles. As to quaternary structure, (Microbial infection) Interacts (via N-terminus) with HCV non-structural protein 5A (via N-terminus); this interaction seems to regulate the association of HCV particles with ApoE. Highly expressed in liver and small intestine and, at lower levels, in colon, kidney and spleen.

Its subcellular location is the lipid droplet. It is found in the endoplasmic reticulum membrane. The protein resides in the golgi apparatus. The protein localises to the cytoplasmic vesicle. It localises to the COPI-coated vesicle. Lipid transferase specifically expressed in hepatocytes, which promotes unilocular lipid droplet formation by mediating lipid droplet fusion. Lipid droplet fusion promotes their enlargement, restricting lipolysis and favoring lipid storage. Localizes on the lipid droplet surface, at focal contact sites between lipid droplets, and mediates atypical lipid droplet fusion by promoting directional net neutral lipid transfer from the smaller to larger lipid droplets. The transfer direction may be driven by the internal pressure difference between the contacting lipid droplet pair. Promotes lipid exchange and lipid droplet fusion in both small and large lipid droplet-containing hepatocytes. In addition to its role in lipid droplet fusion, also involved in cytoplasmic vesicle biogenesis and transport. Required for very-low-density lipoprotein (VLDL) lipidation and maturation. Probably involved in the biogenesis of VLDL transport vesicles by forming a COPII vesicle coat and facilitating the formation of endoplasmic reticulum-derived large vesicles. Also involved in sterol-regulated export of the SCAP-SREBP complex, composed of SCAP, SREBF1/SREBP1 and SREBF2/SREBP2, by promoting loading of SCAP-SREBP into COPII vesicles. May also activate apoptosis. Its function is as follows. (Microbial infection) Involved in Hepatatis C virus (HCV) assembly and required for HCV entry into hepatocytes. The chain is Lipid transferase CIDEB from Homo sapiens (Human).